Reading from the N-terminus, the 328-residue chain is Malate dehydrogenase (328 aa).

12–18 contacts NAD(+); sequence GAAGQIG. Arg95 and Arg101 together coordinate substrate. Residues Asn108, Gln115, and 132–134 each bind NAD(+); that span reads VGN. Residues Asn134 and Arg165 each coordinate substrate. His190 (proton acceptor) is an active-site residue.

Belongs to the LDH/MDH superfamily. MDH type 2 family.

The enzyme catalyses (S)-malate + NAD(+) = oxaloacetate + NADH + H(+). In terms of biological role, catalyzes the reversible oxidation of malate to oxaloacetate. The chain is Malate dehydrogenase from Acidovorax ebreus (strain TPSY) (Diaphorobacter sp. (strain TPSY)).